Consider the following 570-residue polypeptide: Sulfite reductase [NADPH] hemoprotein beta-component (570 aa).

Positions 434, 440, 479, and 483 each coordinate [4Fe-4S] cluster. A siroheme-binding site is contributed by Cys-483.

This sequence belongs to the nitrite and sulfite reductase 4Fe-4S domain family. Alpha(8)-beta(8). The alpha component is a flavoprotein, the beta component is a hemoprotein. It depends on siroheme as a cofactor. [4Fe-4S] cluster is required as a cofactor.

The catalysed reaction is hydrogen sulfide + 3 NADP(+) + 3 H2O = sulfite + 3 NADPH + 4 H(+). The protein operates within sulfur metabolism; hydrogen sulfide biosynthesis; hydrogen sulfide from sulfite (NADPH route): step 1/1. Functionally, component of the sulfite reductase complex that catalyzes the 6-electron reduction of sulfite to sulfide. This is one of several activities required for the biosynthesis of L-cysteine from sulfate. This is Sulfite reductase [NADPH] hemoprotein beta-component from Salmonella paratyphi A (strain ATCC 9150 / SARB42).